The sequence spans 500 residues: MSSIQNKTDVILIGAGIMSATLGSLLKELKPEWEIKVFEKLANAGEESSNEWNNAGTGHAALCELNYTAEKSDGTIDISKAVKINEQFQISRQFWAYLVSQNLISNPQDFIMPIPHMSLVQGEDNVAYLKKRFKALSNIPLFEGMEFSNDPEKLKEWIPLVMEGRTSNEPIAATKIDSGTDVNFGALTRMLFEHLKEQNVEVHYKHSVKDIKRTSDGSWSVKVQEIESGTIEYHTANFVFIGGGGGSLPLLQKTGIPESKNIGGFPVSGLFMVCNNPEVVEQHHAKVYGKAKVGAPPMSVPHLDTRYIDNKKSLLFGPFAGFSPKFLKTGSNFDLIGSVKPYNVFTMLAAGAKEMSLTKYLIQQVMLSKEKRMAELREFMPNAKSEDWDIVVAGQRVQVIKDTEAGGKGTLQFGTEVVSSADGSIAALLGASPGASTAVHVMLEVLEKCFPHHMLEWQPKIKEMIPSYGVSLAENRELFQEIHQSTAEALGLSEKELVHS.

The protein belongs to the MQO family. FAD serves as cofactor.

It carries out the reaction (S)-malate + a quinone = a quinol + oxaloacetate. The protein operates within carbohydrate metabolism; tricarboxylic acid cycle; oxaloacetate from (S)-malate (quinone route): step 1/1. In Halalkalibacterium halodurans (strain ATCC BAA-125 / DSM 18197 / FERM 7344 / JCM 9153 / C-125) (Bacillus halodurans), this protein is Probable malate:quinone oxidoreductase.